The following is an 886-amino-acid chain: Valine--tRNA ligase (886 aa).

The 'HIGH' region signature appears at 53 to 63 (PNVTGSLHMGH). The short motif at 540 to 544 (KMSKS) is the 'KMSKS' region element. Residue Lys-543 participates in ATP binding. A coiled-coil region spans residues 820-851 (IDVAAERRRMEKDLAAAQKELASTAAKLANAD).

It belongs to the class-I aminoacyl-tRNA synthetase family. ValS type 1 subfamily. Monomer.

It localises to the cytoplasm. The enzyme catalyses tRNA(Val) + L-valine + ATP = L-valyl-tRNA(Val) + AMP + diphosphate. In terms of biological role, catalyzes the attachment of valine to tRNA(Val). As ValRS can inadvertently accommodate and process structurally similar amino acids such as threonine, to avoid such errors, it has a 'posttransfer' editing activity that hydrolyzes mischarged Thr-tRNA(Val) in a tRNA-dependent manner. In Mycobacterium leprae (strain TN), this protein is Valine--tRNA ligase.